A 590-amino-acid polypeptide reads, in one-letter code: L-asparaginase (590 aa).

Positions Ala-6–Asn-357 constitute an Asparaginase/glutaminase domain. The active-site O-isoaspartyl threonine intermediate is Thr-16. Residues Asn-44 to Lys-351 form an asparaginase region. Substrate contacts are provided by residues Asp-85–Ser-87 and Thr-117–Asp-118. ANK repeat units lie at residues Ile-398 to Val-427, Asn-431 to Leu-460, Arg-497 to Gln-526, and Asn-530 to Lys-559.

This sequence in the N-terminal section; belongs to the asparaginase 1 family. As to expression, may be present in the larval cuticle.

It catalyses the reaction L-asparagine + H2O = L-aspartate + NH4(+). The chain is L-asparaginase from Dirofilaria immitis (Canine heartworm).